A 323-amino-acid polypeptide reads, in one-letter code: Serine/threonine-protein phosphatase PP1 (323 aa).

The Mn(2+) site is built by Asp63, His65, Asp91, and Asn123. The active-site Proton donor is His124. The Mn(2+) site is built by His172 and His247.

Belongs to the PPP phosphatase family. PP-1 subfamily. Mn(2+) is required as a cofactor.

The catalysed reaction is O-phospho-L-seryl-[protein] + H2O = L-seryl-[protein] + phosphate. It carries out the reaction O-phospho-L-threonyl-[protein] + H2O = L-threonyl-[protein] + phosphate. Its function is as follows. Plays an important role in the control of mitosis by reversing the action of the nimA kinase. The protein is Serine/threonine-protein phosphatase PP1 (bimG) of Emericella nidulans (strain FGSC A4 / ATCC 38163 / CBS 112.46 / NRRL 194 / M139) (Aspergillus nidulans).